The sequence spans 350 residues: Holliday junction branch migration complex subunit RuvB (350 aa).

The disordered stretch occupies residues 1–20; the sequence is MIEADRLITASPREREEQQD. Positions 4–184 are large ATPase domain (RuvB-L); the sequence is ADRLITASPR…FGIVQRLEFY (181 aa). Residues isoleucine 23, arginine 24, glycine 65, lysine 68, threonine 69, threonine 70, 131-133, arginine 174, tyrosine 184, and arginine 221 each bind ATP; that span reads EDF. Threonine 69 contacts Mg(2+). Residues 185–255 form a small ATPAse domain (RuvB-S) region; the sequence is GIDDLATIVT…IADQALNLLD (71 aa). A head domain (RuvB-H) region spans residues 258–350; sequence ERGFDHSDRR…SGDLFAVSDE (93 aa). Residues arginine 294, arginine 313, and arginine 318 each coordinate DNA.

This sequence belongs to the RuvB family. Homohexamer. Forms an RuvA(8)-RuvB(12)-Holliday junction (HJ) complex. HJ DNA is sandwiched between 2 RuvA tetramers; dsDNA enters through RuvA and exits via RuvB. An RuvB hexamer assembles on each DNA strand where it exits the tetramer. Each RuvB hexamer is contacted by two RuvA subunits (via domain III) on 2 adjacent RuvB subunits; this complex drives branch migration. In the full resolvosome a probable DNA-RuvA(4)-RuvB(12)-RuvC(2) complex forms which resolves the HJ.

The protein localises to the cytoplasm. The enzyme catalyses ATP + H2O = ADP + phosphate + H(+). Functionally, the RuvA-RuvB-RuvC complex processes Holliday junction (HJ) DNA during genetic recombination and DNA repair, while the RuvA-RuvB complex plays an important role in the rescue of blocked DNA replication forks via replication fork reversal (RFR). RuvA specifically binds to HJ cruciform DNA, conferring on it an open structure. The RuvB hexamer acts as an ATP-dependent pump, pulling dsDNA into and through the RuvAB complex. RuvB forms 2 homohexamers on either side of HJ DNA bound by 1 or 2 RuvA tetramers; 4 subunits per hexamer contact DNA at a time. Coordinated motions by a converter formed by DNA-disengaged RuvB subunits stimulates ATP hydrolysis and nucleotide exchange. Immobilization of the converter enables RuvB to convert the ATP-contained energy into a lever motion, pulling 2 nucleotides of DNA out of the RuvA tetramer per ATP hydrolyzed, thus driving DNA branch migration. The RuvB motors rotate together with the DNA substrate, which together with the progressing nucleotide cycle form the mechanistic basis for DNA recombination by continuous HJ branch migration. Branch migration allows RuvC to scan DNA until it finds its consensus sequence, where it cleaves and resolves cruciform DNA. The protein is Holliday junction branch migration complex subunit RuvB of Ectopseudomonas mendocina (strain ymp) (Pseudomonas mendocina).